Here is a 511-residue protein sequence, read N- to C-terminus: Histidine ammonia-lyase (511 aa).

The 5-imidazolinone (Ala-Gly) cross-link spans 142–144 (ASG). S143 is subject to 2,3-didehydroalanine (Ser).

This sequence belongs to the PAL/histidase family. In terms of processing, contains an active site 4-methylidene-imidazol-5-one (MIO), which is formed autocatalytically by cyclization and dehydration of residues Ala-Ser-Gly.

It localises to the cytoplasm. The catalysed reaction is L-histidine = trans-urocanate + NH4(+). It participates in amino-acid degradation; L-histidine degradation into L-glutamate; N-formimidoyl-L-glutamate from L-histidine: step 1/3. The protein is Histidine ammonia-lyase of Brucella suis (strain ATCC 23445 / NCTC 10510).